The following is a 454-amino-acid chain: Aminodeoxychorismate synthase component 1 (454 aa).

Residues Ser37, 44 to 47, and 241 to 243 each bind L-tryptophan; these read YNRF and PFS. The Proton donor role is filled by Glu259. The active-site N6-(4-deoxychorismate)-lysine intermediate is the Lys275.

Belongs to the anthranilate synthase component I family. Monomer. Heterodimer consisting of two non-identical subunits: a glutamine amidotransferase subunit (PabA) and a aminodeoxychorismate synthase subunit (PabB). Mg(2+) serves as cofactor.

The catalysed reaction is chorismate + L-glutamine = 4-amino-4-deoxychorismate + L-glutamate. It functions in the pathway cofactor biosynthesis; tetrahydrofolate biosynthesis; 4-aminobenzoate from chorismate: step 1/2. Functionally, part of a heterodimeric complex that catalyzes the two-step biosynthesis of 4-amino-4-deoxychorismate (ADC), a precursor of p-aminobenzoate (PABA) and tetrahydrofolate. In the first step, a glutamine amidotransferase (PabA) generates ammonia as a substrate that, along with chorismate, is used in the second step, catalyzed by aminodeoxychorismate synthase (PabB) to produce ADC. The chain is Aminodeoxychorismate synthase component 1 (pabB) from Salmonella typhimurium (strain LT2 / SGSC1412 / ATCC 700720).